A 213-amino-acid chain; its full sequence is Lysozyme g-like protein 2 (213 aa).

Positions 1–19 (MVPSVVFWGLIALVGTAKG) are cleaved as a signal peptide. 2 cysteine pairs are disulfide-bonded: Cys40–Cys93 and Cys54–Cys62. Glu106 is an active-site residue.

It belongs to the glycosyl hydrolase 23 family.

It localises to the secreted. Functionally, may act as a potent antibacterial protein that may play a role in the innate immunity. This chain is Lysozyme g-like protein 2 (Lyg2), found in Mus musculus (Mouse).